A 300-amino-acid polypeptide reads, in one-letter code: tRNA dimethylallyltransferase 2 (300 aa).

ATP is bound at residue G13–T20. Residue T15–T20 coordinates substrate. Residues D38 to Q41 form an interaction with substrate tRNA region.

This sequence belongs to the IPP transferase family. As to quaternary structure, monomer. Mg(2+) is required as a cofactor.

It catalyses the reaction adenosine(37) in tRNA + dimethylallyl diphosphate = N(6)-dimethylallyladenosine(37) in tRNA + diphosphate. Its function is as follows. Catalyzes the transfer of a dimethylallyl group onto the adenine at position 37 in tRNAs that read codons beginning with uridine, leading to the formation of N6-(dimethylallyl)adenosine (i(6)A). This Porphyromonas gingivalis (strain ATCC 33277 / DSM 20709 / CIP 103683 / JCM 12257 / NCTC 11834 / 2561) protein is tRNA dimethylallyltransferase 2.